The following is a 188-amino-acid chain: Putative ankyrin repeat protein FPV230 (188 aa).

ANK repeat units lie at residues Glu-2–Ala-31, Lys-36–Val-65, Leu-135–Ile-164, and Asn-168–Cys-187.

The protein is Putative ankyrin repeat protein FPV230 of Vertebrata (FPV).